The following is a 354-amino-acid chain: Neutral protease 2 homolog AN7962 (354 aa).

The signal sequence occupies residues 1–19 (MKFIAPIALLGMFQAASAS). Positions 20 to 178 (PVDIKTSNAG…GAQLSKLSKR (159 aa)) are excised as a propeptide. 2 disulfides stabilise this stretch: Cys184-Cys255 and Cys262-Cys280. His305 provides a ligand contact to Zn(2+). Glu306 is an active-site residue. Zn(2+) is bound by residues His309 and Asp320.

Belongs to the peptidase M35 family. It depends on Zn(2+) as a cofactor.

It is found in the secreted. It catalyses the reaction Preferential cleavage of bonds with hydrophobic residues in P1'. Also 3-Asn-|-Gln-4 and 8-Gly-|-Ser-9 bonds in insulin B chain.. Secreted metalloproteinase that allows assimilation of proteinaceous substrates. Shows high activities on basic nuclear substrates such as histone and protamine. The polypeptide is Neutral protease 2 homolog AN7962 (Emericella nidulans (strain FGSC A4 / ATCC 38163 / CBS 112.46 / NRRL 194 / M139) (Aspergillus nidulans)).